The primary structure comprises 336 residues: Probable magnesium transporter NIPA2 (336 aa).

Residues 1–7 (MEEMSPD) are Extracellular-facing. The helical transmembrane segment at 8-28 (NIHGVILAVSSSIFIGSSFII) threads the bilayer. Residues 29–55 (KKKGLKKAGVSGARAGEGGYGYLYEPW) are Cytoplasmic-facing. The chain crosses the membrane as a helical span at residues 56–76 (WWAGMITMIVGEIANFAAYAF). Over 77-79 (APA) the chain is Extracellular. A helical membrane pass occupies residues 80-100 (ILVTPLGALSIIFSAVLAHFI). Residues 101–104 (LEEK) lie on the Cytoplasmic side of the membrane. Residues 105–125 (LHMFGILGCVLCVVGSTTIVL) form a helical membrane-spanning segment. Topologically, residues 126–145 (HAPHEQGIESVKQVWHLATE) are extracellular. The helical transmembrane segment at 146 to 166 (PGFLAYSAVVLVVVLALIFYY) threads the bilayer. Residues 167–179 (EPRYGKTHMIVYV) are Cytoplasmic-facing. Residues 180–200 (GICSLMGSLTVMSVKAVAIAI) traverse the membrane as a helical segment. Residues 201–212 (KLTFSGMNQFKY) are Extracellular-facing. A helical membrane pass occupies residues 213 to 233 (FHAWIFIIVVTICCILQINYL). The Cytoplasmic segment spans residues 234-244 (NKALDNFNTAV). Residues 245–265 (ISPVYYVMFTTFTILASMIMF) form a helical membrane-spanning segment. Residues 266–272 (KDWASQS) are Extracellular-facing. A helical transmembrane segment spans residues 273–293 (GLQIATELCGFVTILSGTFLL). Topologically, residues 294-336 (HKTKDMGNSTSLRGSTSHSPRDTPVFINSGSSRSSNSTRPAIL) are cytoplasmic. The disordered stretch occupies residues 303-336 (TSLRGSTSHSPRDTPVFINSGSSRSSNSTRPAIL). Positions 321–330 (NSGSSRSSNS) are enriched in low complexity.

This sequence belongs to the NIPA (TC 2.A.7) family. As to quaternary structure, homodimer.

It is found in the cell membrane. The protein resides in the early endosome. Its function is as follows. Acts as a Mg(2+) transporter. Can also transport other divalent cations such as Fe(2+), Sr(2+), Ba(2+), Mn(2+) and Co(2+) but to a much less extent than Mg(2+). The chain is Probable magnesium transporter NIPA2 from Arabidopsis thaliana (Mouse-ear cress).